A 902-amino-acid polypeptide reads, in one-letter code: Cysteine-tryptophan domain-containing zinc finger protein 3 (902 aa).

The CW-type zinc-finger motif lies at 21–74; it reads VLIEDNWVCCDMCHKWRLLPYGTNTSMLPKKWICSMLDWLPGMNKCDISEDETT. C30, C33, C54, and C66 together coordinate Zn(2+). 4 disordered regions span residues 131-233, 326-345, 420-480, and 537-651; these read EHDQ…EDRH, EDNR…NENL, QSST…LNAD, and HGPT…SASP. 2 stretches are compositionally biased toward basic and acidic residues: residues 151–169 and 193–203; these read KNRE…DPVS and SHSDGGDLTEK. Positions 204-213 are enriched in basic residues; it reads SKKHSKSKNR. Basic and acidic residues-rich tracts occupy residues 214–233 and 335–345; these read RGID…EDRH and HTSKGGDNENL. The segment covering 421 to 433 has biased composition (low complexity); the sequence is SSTVATSSSSKVS. Composition is skewed to polar residues over residues 450–463, 564–588, and 599–611; these read ESVS…SNTD, NSAP…QIEM, and IDNQ…IGQD. The span at 612–625 shows a compositional bias: basic and acidic residues; sequence NHSHMKEGKSEVHT. Positions 634 to 648 are enriched in polar residues; the sequence is KNHTQLRSNVENGDS.

In terms of tissue distribution, expressed in leaf sheaths, flag leaves, nodes, internodes and panicles.

The protein resides in the nucleus. Functionally, binds to histones H3K4me1, H3K4me2 and H3K4me3 in GST pull-down assay. May facilitate the recruitment of effectors to mediate gene expression. In Oryza sativa subsp. japonica (Rice), this protein is Cysteine-tryptophan domain-containing zinc finger protein 3.